Reading from the N-terminus, the 156-residue chain is Deoxyuridine 5'-triphosphate nucleotidohydrolase (156 aa).

Substrate-binding positions include 76 to 78, N89, 93 to 95, and K103; these read RSG and TVD.

Belongs to the dUTPase family. Requires Mg(2+) as cofactor.

It catalyses the reaction dUTP + H2O = dUMP + diphosphate + H(+). The protein operates within pyrimidine metabolism; dUMP biosynthesis; dUMP from dCTP (dUTP route): step 2/2. Its function is as follows. This enzyme is involved in nucleotide metabolism: it produces dUMP, the immediate precursor of thymidine nucleotides and it decreases the intracellular concentration of dUTP so that uracil cannot be incorporated into DNA. This chain is Deoxyuridine 5'-triphosphate nucleotidohydrolase, found in Rhizobium etli (strain ATCC 51251 / DSM 11541 / JCM 21823 / NBRC 15573 / CFN 42).